The chain runs to 731 residues: EF-hand calcium-binding domain-containing protein 4B (731 aa).

A disordered region spans residues 1–45; it reads MAAPDGRVVSRPQRLGQGSGQGPKGSGACLHPLDSLEQKETQEQT. The region spanning 84–119 is the EF-hand domain; it reads LSLEELEDVFDALDADGNGYLTPQEFTTGFSHFFFS. Residues Asp97, Asp99, Asn101, Tyr103, and Glu108 each contribute to the Ca(2+) site. Residues 201 to 382 adopt a coiled-coil conformation; that stretch reads LTRIISQLQE…RERNKHLRDE (182 aa). The segment at 349 to 540 is proline-rich domain (PRD) which mediates interaction with VAV1; sequence MEVYRVTESL…ALCKEESSPS (192 aa). 2 disordered regions span residues 426 to 466 and 494 to 528; these read SEEE…PYPR and CSEE…QPVG. Residues Ser554, Val556, Gly557, Lys558, Thr559, Ser560, Ser571, Pro572, and Thr577 each coordinate GTP. Mg(2+) is bound at residue Thr559. The segment at 572–580 is switch-I; the sequence is PGMAATVGI. Residues Thr577 and Asp600 each contribute to the Mg(2+) site. 5 residues coordinate GTP: Gly603, Asn658, Lys659, Asp661, and Ala689. A switch-II region spans residues 603–619; that stretch reads GQERYRCITQQFFRKAD. A lipid anchor (S-geranylgeranyl cysteine) is attached at Cys729.

Belongs to the EFCAB4 family. Interacts with ORAI1 and STIM1; the interaction is direct and takes place in absence of Ca(2+). Forms a complex with ORAI1 and STIM1 at low concentration of Ca(2+), the complex dissociates at elevated Ca(2+) concentrations. Interacts with ORAI2 and ORAI3. As to quaternary structure, interacts with DYNC1H1. Interacts with the dynein-dynactin complex in a Ca(2+)-dependent manner. Interacts with VAV1. The cofactor is Mg(2+). As to expression, expressed in the Jurkat T-cell line. Expressed in endothelial cells. Expressed in Weibel-Palade bodies (which are P-selectin/SELP negative) in endothelial cells. Expressed in the Jurkat T-cell line.

Its subcellular location is the cytoplasm. It is found in the cytoskeleton. It localises to the microtubule organizing center. The protein localises to the cell membrane. The protein resides in the golgi apparatus membrane. Its subcellular location is the golgi apparatus. It is found in the trans-Golgi network membrane. It localises to the vesicle. It carries out the reaction GTP + H2O = GDP + phosphate + H(+). Its function is as follows. Ca(2+)-binding protein that plays a key role in store-operated Ca(2+) entry (SOCE) in T-cells by regulating CRAC channel activation. Acts as a cytoplasmic calcium-sensor that facilitates the clustering of ORAI1 and STIM1 at the junctional regions between the plasma membrane and the endoplasmic reticulum upon low Ca(2+) concentration. It thereby regulates CRAC channel activation, including translocation and clustering of ORAI1 and STIM1. Upon increase of cytoplasmic Ca(2+) resulting from opening of CRAC channels, dissociates from ORAI1 and STIM1, thereby destabilizing the ORAI1-STIM1 complex. In terms of biological role, rab GTPase that mediates the trafficking of Weibel-Palade bodies (WPBs) to microtubule organizing center (MTOC) in endothelial cells in response to acute inflammatory stimuli. During histamine (but not thrombin) stimulation of endothelial cells, the dynein-bound form induces retrograde transport of a subset of WPBs along microtubules to the MTOC in a Ca(2+)-independent manner and its GTPase activity is essential for this function. Ca(2+)-regulated dynein adapter protein that activates dynein-mediated transport and dynein-dynactin motility on microtubules and regulates endosomal trafficking of CD47. Acts as an intracellular signaling module bridging two important T-cell receptor (TCR) signaling pathways, Ca(2+)-NFAT and JNK, to affect T-cell activation. In resting T-cells, is predominantly localized near TGN network in a GTP-bound form, upon TCR stimulation, localizes at the immunological synapse via interaction with VAV1 to activate downstream Ca(2+)-NFAT and JNK signaling pathways. Plays a role in T-helper 1 (Th1) cell differentiation and T-helper 17 (Th17) cell effector function. Plays a role in store-operated Ca(2+) entry (SOCE) in T-cells by regulating CRAC channel activation. In Homo sapiens (Human), this protein is EF-hand calcium-binding domain-containing protein 4B.